A 312-amino-acid chain; its full sequence is Plasma membrane-associated coenzyme Q6 reductase PGA3 (312 aa).

At 1–15 (MSKEDIEGTNILDEP) the chain is on the extracellular side. Residues 16–36 (VHGIYIPAALFVVGVAITTYM) form a helical membrane-spanning segment. The Cytoplasmic segment spans residues 37–39 (SGE). A helical transmembrane segment spans residues 40 to 60 (LKILWSLPILFMIIFVRAYSA). Over 61–179 (YKRRRSLYPD…LNYEPNSSKH (119 aa)) the chain is Extracellular. In terms of domain architecture, FAD-binding FR-type spans 70–173 (DRWTSLELED…KGPIGTLNYE (104 aa)). FAD contacts are provided by residues 153–168 (AGLN…GPIG) and 179–211 (HLGI…KVSL). Residues 180–200 (LGIVAGGSGITPVLQILNEII) traverse the membrane as a helical segment. The Cytoplasmic portion of the chain corresponds to 201–312 (TVPEDLTKVS…SSGDDQVFVF (112 aa)).

The protein belongs to the flavoprotein pyridine nucleotide cytochrome reductase family. The cofactor is FAD.

It localises to the cell membrane. The protein resides in the endoplasmic reticulum membrane. It carries out the reaction 2 Fe(III)-[cytochrome b5] + NADH = 2 Fe(II)-[cytochrome b5] + NAD(+) + H(+). Its activity is regulated as follows. Inhibited by diphenylene iodonium (DPI). Its function is as follows. NADH-dependent cytochrome b5 reductase that reduces coenzyme Q6 at the plasma membrane and mediates lifespan extension by calorie restriction by shifting fermentative to respiratory metabolism, probably through modulating the NAD(+)/NADH ratio. This chain is Plasma membrane-associated coenzyme Q6 reductase PGA3 (PGA3), found in Saccharomyces cerevisiae (strain ATCC 204508 / S288c) (Baker's yeast).